A 418-amino-acid chain; its full sequence is Tyrosine--tRNA ligase (418 aa).

L-tyrosine is bound at residue tyrosine 34. The short motif at 39 to 48 (PTADSLHLGH) is the 'HIGH' region element. The L-tyrosine site is built by tyrosine 169 and glutamine 173. The 'KMSKS' region motif lies at 229 to 233 (KFGKS). An ATP-binding site is contributed by lysine 232. Positions 352–410 (LNIVELLVTSGIVNSKRQAREDVQNGAIYVNGERVQDLDYTLSDSDKIDGELTVIRRGK) constitute an S4 RNA-binding domain.

The protein belongs to the class-I aminoacyl-tRNA synthetase family. TyrS type 1 subfamily. In terms of assembly, homodimer.

Its subcellular location is the cytoplasm. The catalysed reaction is tRNA(Tyr) + L-tyrosine + ATP = L-tyrosyl-tRNA(Tyr) + AMP + diphosphate + H(+). Functionally, catalyzes the attachment of tyrosine to tRNA(Tyr) in a two-step reaction: tyrosine is first activated by ATP to form Tyr-AMP and then transferred to the acceptor end of tRNA(Tyr). In Streptococcus suis (strain 98HAH33), this protein is Tyrosine--tRNA ligase.